Consider the following 187-residue polypeptide: CASP-like protein SELMODRAFT_416718 (187 aa).

The chain crosses the membrane as a helical span at residues 1–21 (MMFGGVGMATLPLSLIFAFKN). Over 22–100 (RPKCVITRAQ…EAFPQGEKAD (79 aa)) the chain is Extracellular. The chain crosses the membrane as a helical span at residues 101-119 (TSWALTVLFYLAKLVFGIL). Over 120–125 (GLALSV) the chain is Cytoplasmic. A helical transmembrane segment spans residues 126-145 (IWLLHIIVFMLVNPPAFPFL). Residues 146–155 (NQVFIQLDSA) are Extracellular-facing. A helical membrane pass occupies residues 156–176 (WGLLGTTAFAIFCYYLVMSVI). Residues 177–187 (SGEMHSIYPMK) are Cytoplasmic-facing.

This sequence belongs to the Casparian strip membrane proteins (CASP) family. As to quaternary structure, homodimer and heterodimers.

It localises to the cell membrane. The protein is CASP-like protein SELMODRAFT_416718 of Selaginella moellendorffii (Spikemoss).